We begin with the raw amino-acid sequence, 41 residues long: Competence-stimulating peptide type 2 (41 aa).

A propeptide spanning residues 1–24 (MKNTVKLEQFVALKEKDLQKIKGG) is cleaved from the precursor.

This sequence belongs to the ComC family.

It is found in the secreted. In terms of biological role, acts as a pheromone, induces cells to develop competence for genetic transformation. The sequence is that of Competence-stimulating peptide type 2 (comC2) from Streptococcus pneumoniae serotype 4 (strain ATCC BAA-334 / TIGR4).